The primary structure comprises 496 residues: MAGNGVFVDIIEGDVFKYYSEGEWKKSASGKSVAIINPTTRKTQYKVQACTQEEVNKVMEVAKTAQKSWAKTPLWKRAELLHKAAAILKEHKAPIAECLVKEIAKPAKDAVTEVVRSGDLVSYTAEEGVRILGEGKFLVSDSFPGNERTKYCLTSKIPLGVILAIPPFNYPVNLAVSKIAPALIAGNSLVLKPPTQGAVACLHMVHCFHLAGFPKGLISCVTGKGSEIGDFLTMHPGVHCISFTGGDTGVAISKKAGMIPLQMELGGKDACIVLEDADLDLAAGSIVKGGFSYSGQRCTAVKVVLVMESVADALVEKVNAKVAKLTVGPPEDDCDITPVVSESSANFIEGLVMDAKQKNATFCQQYKREGNLIWPLLLDNVRPDMRIAWEEPFGPVLPVIRINSVEEGIHHCNASNFGLQGCVFTKDINKAILISDAMETGTVQINSAPARGPDHFPFQGIKDSGIGSQGITNSINMMTKVKTTVINLPTPSYTMG.

Residues Arg-116 and 169–170 (NY) contribute to the substrate site. NADP(+) is bound by residues Lys-192, Thr-195, and Asp-230. 245-249 (GGDTG) lines the NAD(+) pocket. Catalysis depends on Glu-264, which acts as the Proton acceptor. 297-299 (RCT) contacts substrate. Cys-298 serves as the catalytic Nucleophile. Glu-391 contributes to the NADP(+) binding site. Arg-451 contributes to the substrate binding site.

It belongs to the aldehyde dehydrogenase family.

The protein resides in the cytoplasm. The enzyme catalyses D-glyceraldehyde 3-phosphate + NADP(+) + H2O = (2R)-3-phosphoglycerate + NADPH + 2 H(+). In terms of biological role, important as a means of generating NADPH for biosynthetic reactions. This is NADP-dependent glyceraldehyde-3-phosphate dehydrogenase (GAPN) from Nicotiana plumbaginifolia (Leadwort-leaved tobacco).